The sequence spans 1151 residues: ATP-dependent RNA helicase ddx46 (1151 aa).

Basic and acidic residues-rich tracts occupy residues 1–26 (MDEYDKKRRLEHGGSDRSRSSNDNRN) and 35–51 (YRDDRKDDRYYRDDRSH). Disordered stretches follow at residues 1–138 (MDEY…SRFD), 166–224 (MYQQ…VFQQ), 287–358 (QELK…PLVN), and 424–449 (TSQMIDDDEKLEEESEGEDDGKDKTI). Residues 52-73 (YNNNNNNNNNNNNNNNNNNGNG) are compositionally biased toward low complexity. The segment covering 81-90 (SSQNKYQNHH) has biased composition (polar residues). 4 stretches are compositionally biased toward low complexity: residues 91–124 (QQSPPQQQQQQQNSSYVPSQPPQQQTQTQQQPHI), 166–199 (MYQQPMYQQKQQQPQPPIFQQQQKQQQPPIFQHH), 207–224 (QPPVYQQQQQQQQPVFQQ), and 291–339 (ASGS…TTSP). Acidic residues predominate over residues 428–443 (IDDDEKLEEESEGEDD). Positions 509-537 (QSWAQAGLTEKVHLLLKKFQYEKPTSIQA) match the Q motif motif. Positions 540–718 (IPAIMNGRDL…KKILNKPLEI (179 aa)) constitute a Helicase ATP-binding domain. ATP is bound at residue 553–560 (ARTGSGKT). The short motif at 666-669 (DEAD) is the DEAD box element. Positions 729-890 (DIEQFVEVRP…KVPDELRKLN (162 aa)) constitute a Helicase C-terminal domain. A disordered region spans residues 904–972 (LLAPTGFTGR…EKEKQLLSEK (69 aa)). Residues 915 to 930 (HKFDAAEEDKKNIERK) show a composition bias toward basic and acidic residues. Over residues 938-948 (IEEEEEEEDED) the composition is skewed to acidic residues. The segment covering 949–972 (KEKAEKEKLAAASAEKEKQLLSEK) has biased composition (basic and acidic residues).

Belongs to the DEAD box helicase family. DDX46/PRP5 subfamily. Component of the 17S U2 SnRNP complex, a ribonucleoprotein complex that contains small nuclear RNA (snRNA) U2 and a number of specific proteins.

Its subcellular location is the nucleus speckle. It carries out the reaction ATP + H2O = ADP + phosphate + H(+). In terms of biological role, component of the 17S U2 SnRNP complex of the spliceosome, a large ribonucleoprotein complex that removes introns from transcribed pre-mRNAs. In Dictyostelium discoideum (Social amoeba), this protein is ATP-dependent RNA helicase ddx46 (helB1).